The following is a 506-amino-acid chain: Maturase K (506 aa).

This sequence belongs to the intron maturase 2 family. MatK subfamily.

The protein localises to the plastid. The protein resides in the chloroplast. In terms of biological role, usually encoded in the trnK tRNA gene intron. Probably assists in splicing its own and other chloroplast group II introns. The chain is Maturase K from Jasminum nudiflorum (Winter jasmine).